The sequence spans 424 residues: L-threonine:uridine-5'-aldehyde transaldolase (424 aa).

N6-(pyridoxal phosphate)lysine is present on lysine 235.

Belongs to the SHMT family. Pyridoxal 5'-phosphate is required as a cofactor.

The enzyme catalyses uridine-5'-aldehyde + L-threonine = (5'S,6'S)-C-glycyluridine + acetaldehyde. Its pathway is antibiotic biosynthesis. Its function is as follows. Transaldolase involved in the biosynthesis of the lipopeptidyl nucleoside antibiotic A-90289. Catalyzes the condensation of L-threonine and uridine-5'-aldehyde to form 5'-C-glycyluridine (GlyU). Forms (5'S,6'S)-GlyU. Has no activity with alternative amino acids, such as glycine or serine. The chain is L-threonine:uridine-5'-aldehyde transaldolase from Streptomyces sp.